A 64-amino-acid polypeptide reads, in one-letter code: Large ribosomal subunit protein bL33 (64 aa).

The protein belongs to the bacterial ribosomal protein bL33 family.

The polypeptide is Large ribosomal subunit protein bL33 (Prochlorococcus marinus (strain MIT 9313)).